A 159-amino-acid polypeptide reads, in one-letter code: Protein RseC (159 aa).

Residues 1–72 (MIKEWATVVS…QKVELGIAEG (72 aa)) are Cytoplasmic-facing. A helical transmembrane segment spans residues 73-95 (SLLSSALLVYMSPLVGLFLIASL). At 96–98 (FQL) the chain is on the periplasmic side. A helical membrane pass occupies residues 99–121 (LFASDVAALCGAILGGIGGFLIA). Topologically, residues 122-159 (RGYSRKFAARAEWQPIILSVALPPGLVRFETSSEDASQ) are cytoplasmic.

The protein belongs to the RseC family.

The protein localises to the cell inner membrane. Functionally, may play a role in reduction of the SoxR iron-sulfur cluster. May work together with the RsxABCDGE complex. The polypeptide is Protein RseC (Escherichia coli (strain K12)).